Here is a 135-residue protein sequence, read N- to C-terminus: Protein E6 (135 aa).

Zinc fingers lie at residues 11–47 (CVFC…CTAC) and 83–119 (CMYC…CYTC).

This sequence belongs to the papillomaviridae E6 protein family. Forms homodimers. Interacts with ubiquitin-protein ligase UBE3A/E6-AP; this interaction stimulates UBE3A ubiquitin activity. Interacts with host BAK1.

It is found in the host cytoplasm. It localises to the host nucleus. Its function is as follows. Plays a major role in the induction and maintenance of cellular transformation. E6 associates with host UBE3A/E6-AP ubiquitin-protein ligase and modulates its activity. Protects host keratinocytes from apoptosis by mediating the degradation of host BAK1. May also inhibit host immune response. The chain is Protein E6 from Odocoileus virginianus papillomavirus 1 (DPV).